We begin with the raw amino-acid sequence, 184 residues long: Ribosome-recycling factor (184 aa).

Positions 134–167 are disordered; the sequence is MNDQLKKDEKNGDITEDELRSGTEDVQKATDNSI.

Belongs to the RRF family.

Its subcellular location is the cytoplasm. Responsible for the release of ribosomes from messenger RNA at the termination of protein biosynthesis. May increase the efficiency of translation by recycling ribosomes from one round of translation to another. This Staphylococcus aureus (strain Mu3 / ATCC 700698) protein is Ribosome-recycling factor.